A 340-amino-acid chain; its full sequence is Major histocompatibility complex class I-related protein 1 (340 aa).

Residues 1-22 form the signal peptide; it reads MGELTAFLLPLIIVLMVKHSNS. The tract at residues 23–109 is alpha-1; that stretch reads RTHSLRYFRL…KRLQRHYNHS (87 aa). Residues 23–201 are antigen-binding cleft; it reads RTHSLRYFRL…EYGKDTLQRT (179 aa). The Extracellular portion of the chain corresponds to 23-302; sequence RTHSLRYFRL…QESEAIPLVM (280 aa). Residues Tyr29 and Arg31 each contribute to the 8-(9H-purin-6-yl)-2-oxa-8-azabicyclo[3.3.1]nona-3,6-diene-4,6-dicarbaldehyde site. 5-(2-oxoethylideneamino)-6-(D-ribitylamino)uracil contacts are provided by Arg31, Ser46, and Lys65. Arg31, Ser46, and Lys65 together coordinate 5-(2-oxopropylideneamino)-6-(D-ribitylamino)uracil. 3 residues coordinate 7-hydroxy-6-methyl-8-(1-D-ribityl)lumazine: Arg31, Ser46, and Lys65. 2 residues coordinate 8-(9H-purin-6-yl)-2-oxa-8-azabicyclo[3.3.1]nona-3,6-diene-4,6-dicarbaldehyde: Lys65 and His80. Lys65 is a binding site for 2-amino-4-oxopteridine-6-carbaldehyde. Lys65 serves as a coordination point for pyridoxal. Asn107 carries N-linked (GlcNAc...) asparagine glycosylation. Positions 110–201 are alpha-2; that stretch reads GSHTYQRMIG…EYGKDTLQRT (92 aa). Position 116 (Arg116) interacts with 8-(9H-purin-6-yl)-2-oxa-8-azabicyclo[3.3.1]nona-3,6-diene-4,6-dicarbaldehyde. 5-(2-oxoethylideneamino)-6-(D-ribitylamino)uracil-binding residues include Arg116, Tyr174, and Gln175. 3 residues coordinate 5-(2-oxopropylideneamino)-6-(D-ribitylamino)uracil: Arg116, Tyr174, and Gln175. 3 residues coordinate 7-hydroxy-6-methyl-8-(1-D-ribityl)lumazine: Arg116, Tyr174, and Gln175. 2 disulfides stabilise this stretch: Cys120-Cys183 and Cys222-Cys278. The alpha-3 stretch occupies residues 202 to 293; the sequence is EPPLVRVNRK…GVHVVLQVPQ (92 aa). The 80-residue stretch at 203-282 folds into the Ig-like C1-type domain; the sequence is PPLVRVNRKE…SNLYSCHVEH (80 aa). A connecting peptide region spans residues 294–302; sequence ESEAIPLVM. A helical membrane pass occupies residues 303-323; sequence KAVSGSIVFVIVLAGVGVLVW. Topologically, residues 324 to 340 are cytoplasmic; that stretch reads RRRPREQNGAVYLPTPD.

The protein belongs to the MHC class I family. Heterotrimer that consists of MR1, B2M and metabolite antigen. Major classes of metabolite ligands presented by MR1 include riboflavin-related antigens, pyrimidines and ribityl lumazines, nucleobase adducts and folate derivatives. Forms reversible covalent Schiff base complexes with microbial pyrimidine-based metabolite, which serves as a molecular switch triggering complete folding, stable association with B2M and translocation of the ternary complex from endoplasmic reticulum to the plasma membrane. Alternatively, forms non-Schiff base complexes with ribityl lumazines. On antigen-presenting cells, the ternary complex interacts with TCR on MR1-restricted T cells. Interacts with TAPBP and TAPBPL chaperones in the endoplasmic reticulum. TAPBP associated or not with MHC class I peptide loading complex binds ligand-free MR1 or MR1-B2M complex, providing for stable MR1 pools ready for metabolite antigen processing. TAPBPL interacts with MR1 in a ligand-independent way; this interaction may stabilize MR1 pool and facilitate ligand loading and dissociation. Structurally, MR1-B2M heterodimer adopts a topology similar to classical MHC class I molecules, with alpha-1 and alpha-2 domains of MR1 forming the antigen-binding cleft composed of two alpha-helices resting on a floor of 7-stranded anti-parallel beta-pleated sheet. MR1-B2M heterodimer (via alpha-helices) interacts with TCR (via CDR domains). N-glycosylated.

Its subcellular location is the cell membrane. It is found in the endoplasmic reticulum membrane. It localises to the golgi apparatus membrane. The protein resides in the early endosome membrane. The protein localises to the late endosome membrane. Its function is as follows. Antigen-presenting molecule specialized in displaying microbial pyrimidine-based metabolites to alpha-beta T cell receptors (TCR) on innate-type mucosal-associated invariant T (MAIT) cells. In complex with B2M preferentially presents riboflavin-derived metabolites to semi-invariant TCRs on MAIT cells, guiding immune surveillance of the microbial metabolome at mucosal epithelial barriers. Signature pyrimidine-based microbial antigens are generated via non-enzymatic condensation of metabolite intermediates of the riboflavin pathway with by-products arising from other metabolic pathways such as glycolysis. Typical potent antigenic metabolites are 5-(2-oxoethylideneamino)-6-D-ribitylaminouracil (5-OE-RU) and 5-(2-oxopropylideneamino)-6-D-ribitylaminouracil (5-OP-RU), products of condensation of 5-amino-6-D-ribityaminouracil (5-A-RU) with glyoxal or methylglyoxal by-products, respectively. May present microbial antigens to various MAIT cell subsets, providing for unique recognition of diverse microbes, including pathogens that do not synthesize riboflavin. Upon antigen recognition, elicits rapid innate-type MAIT cell activation to eliminate pathogenic microbes by directly killing infected cells. During T cell development, drives thymic selection and post-thymic terminal differentiation of MAIT cells in a process dependent on commensal microflora. Acts as an immune sensor of cancer cell metabolome. May present a tumor-specific or -associated metabolite essential for cancer cell survival to a pan-cancer TCR on a non-MAIT CD8-positive T cell clone, triggering T cell-mediated killing of a wide range of cancer cell types. May present tumor-enriched pyridoxal and pyridoxal 5'-phosphate antigens, enabling preferential recognition of cancer cells. Presents nucleobase carbonyl adducts generated during oxidative stress. Captures M3Ade, a nucleobase adduct composed of one adenine modified by a malondialdehyde trimer, for recognition by MR1-restricted T cell clones expressing a polyclonal TCR repertoire. This is Major histocompatibility complex class I-related protein 1 from Pongo abelii (Sumatran orangutan).